A 217-amino-acid chain; its full sequence is Probable nicotinate-nucleotide adenylyltransferase (217 aa).

This sequence belongs to the NadD family.

It catalyses the reaction nicotinate beta-D-ribonucleotide + ATP + H(+) = deamido-NAD(+) + diphosphate. It functions in the pathway cofactor biosynthesis; NAD(+) biosynthesis; deamido-NAD(+) from nicotinate D-ribonucleotide: step 1/1. Functionally, catalyzes the reversible adenylation of nicotinate mononucleotide (NaMN) to nicotinic acid adenine dinucleotide (NaAD). The protein is Probable nicotinate-nucleotide adenylyltransferase of Baumannia cicadellinicola subsp. Homalodisca coagulata.